A 356-amino-acid chain; its full sequence is tRNA N6-adenosine threonylcarbamoyltransferase (356 aa).

H131 and H135 together coordinate Fe cation. Substrate is bound by residues 154–158 (LVSGG), D187, G200, and N289. A Fe cation-binding site is contributed by D317.

The protein belongs to the KAE1 / TsaD family. Fe(2+) serves as cofactor.

The protein resides in the cytoplasm. It carries out the reaction L-threonylcarbamoyladenylate + adenosine(37) in tRNA = N(6)-L-threonylcarbamoyladenosine(37) in tRNA + AMP + H(+). In terms of biological role, required for the formation of a threonylcarbamoyl group on adenosine at position 37 (t(6)A37) in tRNAs that read codons beginning with adenine. Is involved in the transfer of the threonylcarbamoyl moiety of threonylcarbamoyl-AMP (TC-AMP) to the N6 group of A37, together with TsaE and TsaB. TsaD likely plays a direct catalytic role in this reaction. In Ruthia magnifica subsp. Calyptogena magnifica, this protein is tRNA N6-adenosine threonylcarbamoyltransferase.